Consider the following 249-residue polypeptide: Adenosylcobinamide-GDP ribazoletransferase (249 aa).

Helical transmembrane passes span 29-49 (LYWF…CAWL), 50-70 (PLSI…GFIV), 104-124 (VGSF…VAIL), 131-151 (AFAL…LLAA), 165-185 (GFVG…SLMM), 194-214 (PFLL…IGFL), and 226-246 (VLGA…GVAF).

It belongs to the CobS family. It depends on Mg(2+) as a cofactor.

Its subcellular location is the cell inner membrane. The enzyme catalyses alpha-ribazole + adenosylcob(III)inamide-GDP = adenosylcob(III)alamin + GMP + H(+). It catalyses the reaction alpha-ribazole 5'-phosphate + adenosylcob(III)inamide-GDP = adenosylcob(III)alamin 5'-phosphate + GMP + H(+). The protein operates within cofactor biosynthesis; adenosylcobalamin biosynthesis; adenosylcobalamin from cob(II)yrinate a,c-diamide: step 7/7. Joins adenosylcobinamide-GDP and alpha-ribazole to generate adenosylcobalamin (Ado-cobalamin). Also synthesizes adenosylcobalamin 5'-phosphate from adenosylcobinamide-GDP and alpha-ribazole 5'-phosphate. The chain is Adenosylcobinamide-GDP ribazoletransferase from Chlorobium phaeovibrioides (strain DSM 265 / 1930) (Prosthecochloris vibrioformis (strain DSM 265)).